Consider the following 605-residue polypeptide: Alpha-1,3-galactosidase A (605 aa).

The N-terminal stretch at 1–20 (MKKYLHILPACFLFYAAAHA) is a signal peptide. PbH1 repeat units lie at residues 256 to 278 (SKNI…VSQY), 312 to 334 (KGKV…NVHG), 421 to 443 (TPEV…LVTT), 444 to 466 (PRKV…LIEA), 477 to 507 (VKDV…HPSN), and 517 to 547 (HQNI…LFRN).

The protein belongs to the glycosyl hydrolase 110 family. A subfamily.

It catalyses the reaction Hydrolysis of terminal, non-reducing branched (1-&gt;3)-alpha-D-galactosidic residues, producing free D-galactose.. The enzyme catalyses Hydrolysis of terminal, non-reducing alpha-D-galactose residues in alpha-D-galactosides, including galactose oligosaccharides, galactomannans and galactolipids.. Alpha-galactosidase that specifically removes branched alpha-1,3-linked galactose residues present in blood group B antigens. Has no activity toward linear alpha-1,3-linked galactose residues. This is Alpha-1,3-galactosidase A (glaA) from Bacteroides fragilis (strain ATCC 25285 / DSM 2151 / CCUG 4856 / JCM 11019 / LMG 10263 / NCTC 9343 / Onslow / VPI 2553 / EN-2).